Here is a 489-residue protein sequence, read N- to C-terminus: tRNA(Ile)-lysidine synthase (489 aa).

35-40 contacts ATP; sequence SGGLDS.

Belongs to the tRNA(Ile)-lysidine synthase family.

The protein localises to the cytoplasm. The enzyme catalyses cytidine(34) in tRNA(Ile2) + L-lysine + ATP = lysidine(34) in tRNA(Ile2) + AMP + diphosphate + H(+). Its function is as follows. Ligates lysine onto the cytidine present at position 34 of the AUA codon-specific tRNA(Ile) that contains the anticodon CAU, in an ATP-dependent manner. Cytidine is converted to lysidine, thus changing the amino acid specificity of the tRNA from methionine to isoleucine. The chain is tRNA(Ile)-lysidine synthase from Burkholderia mallei (strain ATCC 23344).